Reading from the N-terminus, the 239-residue chain is Ankyrin repeat domain-containing protein 49 (239 aa).

S49 carries the phosphoserine modification. ANK repeat units follow at residues 73-103, 107-136, 140-169, and 173-206; these read DPSRLLLWAAEKNRLTTVRRLLSEKATHVNT, DEYTPLHRAAYSGHLDIVQELIAQGADVHA, DGWTPLHSACKWNNTRVASFLLQHDADINA, and GLLTPLHLAAGNRDSKDTLELLLMNRYVKPGLKN.

As to expression, widely expressed in fetus, at a high level in fetal liver, brain and lung.

Its subcellular location is the nucleus. Functionally, induces HBG1 expression. May have a role in spermatogenesis where it promotes autophagy in response to serum starvation, via the NF-kappaB pathway. The chain is Ankyrin repeat domain-containing protein 49 (ANKRD49) from Homo sapiens (Human).